We begin with the raw amino-acid sequence, 436 residues long: GTPase Der (436 aa).

2 EngA-type G domains span residues 4 to 167 (PTVA…PNEI) and 175 to 351 (IKFS…HAQN). Residues 10-17 (GRPNVGKS), 57-61 (DTGGI), 119-122 (NKVD), 181-188 (GRPNVGKS), 229-233 (DTAGM), and 294-297 (NKWD) each bind GTP. The KH-like domain occupies 352–436 (LRISSSVLND…PIHLIARKRK (85 aa)).

It belongs to the TRAFAC class TrmE-Era-EngA-EngB-Septin-like GTPase superfamily. EngA (Der) GTPase family. As to quaternary structure, associates with the 50S ribosomal subunit.

GTPase that plays an essential role in the late steps of ribosome biogenesis. This Lactococcus lactis subsp. cremoris (strain SK11) protein is GTPase Der.